A 221-amino-acid chain; its full sequence is MEDDMWCVSSSGSSRSYRSETAAKYQSGPYQDLEEFEEVDDDIAVEYPCPFCASDYDLVELCHHIDEEHRHEANNGICPVCSKRVKMHMVDHITSHHRDVLKSEQKEMSYREDPYLSDKYLQPHLDELPPSMNHHQHPSKHVSDQFLSFINNSALPNQTKLVLPDSSVEDKNPIKDSSAAKEGTSSCPLSDSDKLEKAKKCEFVQGLLSSAMFDDECDSSE.

Disordered stretches follow at residues 1–24 (MEDD…TAAK) and 162–193 (VLPD…SDSD).

The protein belongs to the Di19 family. In terms of processing, not phosphorylated in vitro by CPK3 or CPK11. As to expression, expressed in seedlings, roots, leaves, stems, flowers and siliques.

It is found in the cytoplasm. The protein resides in the nucleus. This Arabidopsis thaliana (Mouse-ear cress) protein is Protein DEHYDRATION-INDUCED 19 homolog 2 (DI19-2).